The primary structure comprises 274 residues: Diaminopimelate epimerase (274 aa).

Residues N11, Q44, and N64 each coordinate substrate. Catalysis depends on C73, which acts as the Proton donor. Substrate-binding positions include G74 to N75, N157, N190, and E208 to R209. The active-site Proton acceptor is the C217. G218–S219 contributes to the substrate binding site.

Belongs to the diaminopimelate epimerase family. As to quaternary structure, homodimer.

Its subcellular location is the cytoplasm. The catalysed reaction is (2S,6S)-2,6-diaminopimelate = meso-2,6-diaminopimelate. Its pathway is amino-acid biosynthesis; L-lysine biosynthesis via DAP pathway; DL-2,6-diaminopimelate from LL-2,6-diaminopimelate: step 1/1. Its function is as follows. Catalyzes the stereoinversion of LL-2,6-diaminopimelate (L,L-DAP) to meso-diaminopimelate (meso-DAP), a precursor of L-lysine and an essential component of the bacterial peptidoglycan. The chain is Diaminopimelate epimerase from Histophilus somni (strain 2336) (Haemophilus somnus).